Here is a 541-residue protein sequence, read N- to C-terminus: NAD(P)H-quinone oxidoreductase subunit 2 A, chloroplastic (541 aa).

A run of 14 helical transmembrane segments spans residues 24–44 (LLLF…GLIL), 57–77 (IPWL…ALLF), 99–119 (IFQF…VEYI), 124–144 (MAIT…MFLC), 149–169 (FITI…LSGY), 183–203 (YLLM…WLYG), 227–247 (PGIS…LSPA), 289–309 (ILSP…AASA), 326–346 (WHLL…LIAI), 354–374 (MLAY…IVGD), 385–405 (YMLF…LFGL), 426–446 (ALSL…AGFF), 449–469 (LYLF…IGLL), and 515–535 (MIVC…IIAI).

It belongs to the complex I subunit 2 family. In terms of assembly, NDH is composed of at least 16 different subunits, 5 of which are encoded in the nucleus.

It is found in the plastid. The protein resides in the chloroplast thylakoid membrane. It catalyses the reaction a plastoquinone + NADH + (n+1) H(+)(in) = a plastoquinol + NAD(+) + n H(+)(out). The enzyme catalyses a plastoquinone + NADPH + (n+1) H(+)(in) = a plastoquinol + NADP(+) + n H(+)(out). In terms of biological role, NDH shuttles electrons from NAD(P)H:plastoquinone, via FMN and iron-sulfur (Fe-S) centers, to quinones in the photosynthetic chain and possibly in a chloroplast respiratory chain. The immediate electron acceptor for the enzyme in this species is believed to be plastoquinone. Couples the redox reaction to proton translocation, and thus conserves the redox energy in a proton gradient. The protein is NAD(P)H-quinone oxidoreductase subunit 2 A, chloroplastic of Coffea arabica (Arabian coffee).